Here is a 1335-residue protein sequence, read N- to C-terminus: Regulatory-associated protein of mTOR (1335 aa).

2 positions are modified to phosphoserine: S44 and S122. S696 is modified (phosphoserine; by MAPK8). An O-linked (GlcNAc) threonine glycan is attached at T700. T706 is subject to Phosphothreonine; by MAPK8. 2 positions are modified to phosphoserine; by RPS6KA1: S719 and S721. Position 722 is a phosphoserine; by AMPK and RPS6KA1 (S722). S738 is subject to Phosphoserine. S791 bears the Phosphoserine; by PKA mark. S792 bears the Phosphoserine; by AMPK mark. 2 positions are modified to phosphoserine: S836 and S855. The disordered stretch occupies residues 850 to 943 (VLDTSSLTQS…PEQTADDADD (94 aa)). Residues 851 to 866 (LDTSSLTQSAPASPTN) show a composition bias toward polar residues. S859 bears the Phosphoserine; by MTOR mark. S863 is modified (phosphoserine; by MAPK8, MTOR and NLK). T865 carries the post-translational modification Phosphothreonine. The span at 874–887 (AGGSPPASSTSSSS) shows a compositional bias: low complexity. S877 is modified (phosphoserine; by TBK1). Glycyl lysine isopeptide (Lys-Gly) (interchain with G-Cter in ubiquitin) cross-links involve residues K932 and K948. Residue S982 is modified to Phosphoserine. 7 WD repeats span residues 1020–1061 (NRNP…DYFH), 1065–1106 (PRYT…EKNP), 1121–1160 (TTRG…KVQD), 1164–1203 (GADS…SECR), 1209–1249 (EHTA…SVNV), 1251–1291 (QIVK…NNIK), and 1299–1335 (QRVG…KRVR). K1097 is subject to N6-acetyllysine.

It belongs to the WD repeat RAPTOR family. As to quaternary structure, part of the mechanistic target of rapamycin complex 1 (mTORC1) which contains MTOR, MLST8 and RPTOR. mTORC1 associates with AKT1S1/PRAS40, which inhibits its activity. mTORC1 associates with DEPTOR, which regulates its activity. mTORC1 binds to and is inhibited by FKBP12-rapamycin. Forms a complex with MTOR under both leucine-rich and -poor conditions. Interacts with (via TOS motifs) EIF4EBP1 and RPS6KB1; interaction is independent of its association with MTOR. Binds preferentially to poorly or non-phosphorylated forms of EIF4EBP1, and this binding is critical to the ability of MTOR to catalyze phosphorylation. Interacts with ULK1 in a nutrient-dependent manner; the interaction is reduced during starvation. Interacts with GTP-bound form of RagA/RRAGA or RagB/RRAGB and GDP-bound form of RagC/RRAGC or RagD/RRAGD, promoting recruitment of mTORC1 to the lysosomes. Interacts (when phosphorylated by AMPK) with 14-3-3 protein, leading to inhibition of its activity. Interacts with SPAG5; SPAG5 competes with MTOR for RPTOR-binding, resulting in decreased mTORC1 formation. Interacts with WAC; WAC positively regulates MTOR activity by promoting the assembly of the TTT complex composed of TELO2, TTI1 and TTI2 and the RUVBL complex composed of RUVBL1 and RUVBL2 into the TTT-RUVBL complex which leads to the dimerization of the mTORC1 complex and its subsequent activation. Interacts with G3BP1. The complex formed with G3BP1 and SPAG5 is increased by oxidative stress. Interacts with HTR6. Interacts with PIH1D1. Interacts with LARP1. Interacts with BRAT1. Interacts with SIK3. Interacts with SLC38A7; this interaction mediates the recruitment of mTORC1 to the lysosome and its subsequent activation. (Microbial infection) Interacts with vaccinia virus protein F17; this interaction dysregulates mTOR. In terms of processing, insulin-stimulated phosphorylation at Ser-863 by MTOR and MAPK8 regulates mTORC1 activity. Phosphorylated at Ser-863 by NLK in response to stress, disrupting the interaction with small GTPases Rag (RagA/RRAGA, RagB/RRAGB, RagC/RRAGC and/or RagD/RRAGD), thereby preventing lysosome recruitment and activation of the mTORC1 complex. Osmotic stress also induces phosphorylation at Ser-696, Thr-706 and Ser-863 by MAPK8. Ser-863 phosphorylation is required for phosphorylation at Ser-855 and Ser-859. In response to nutrient limitation, phosphorylated at Ser-722 and Ser-792 by AMPK; phosphorylation promotes interaction with 14-3-3 proteins, leading to negative regulation of the mTORC1 complex. Phosphorylation at Ser-722 and Ser-792 by AMPK in response to glucose starvation inhibits O-GlcNAcylation by OGT and subsequent activation of mTORC1. In response to growth factors, phosphorylated at Ser-719, Ser-721 and Ser-722 by RPS6KA1, which stimulates mTORC1 activity. Phosphorylation at Ser-791 by PKA downstream of cAMP inhibits the mTORC1 complex. Phosphorylated at Ser-877 by TBK1, leading to negative regulation of the mTORC1 complex. O-GlcNAcylated by OGT upon glucose sufficiency, promoting interaction with small GTPases Rag (RagA/RRAGA, RagB/RRAGB, RagC/RRAGC and/or RagD/RRAGD) and subsequent recruitment of mTORC1 to lysosomal membranes, leading to activation of the mTORC1 complex. Phosphorylation at Ser-722 and Ser-792 by AMPK in response to glucose starvation inhibits O-GlcNAcylation. Post-translationally, acetylation at Lys-1097 by EP300/p300 in response to leucine metabolite acetyl-coA promotes its activity, leading to activation of the mTORC1 complex. Acetylation is decreased in response to fasting. In terms of processing, ubiquitinated, leading to its degradation by the proteasome. Deubiquitinated by OTUB1 via a non-catalytic mechanism. Ubiquitinated by an E3 ubiquitin ligase complex containing VHL. As to expression, highly expressed in skeletal muscle, and in a lesser extent in brain, lung, small intestine, kidney and placenta. In terms of tissue distribution, widely expressed, with highest levels in nasal mucosa and pituitary and lowest in spleen.

The protein localises to the lysosome membrane. It is found in the cytoplasm. Its subcellular location is the cytoplasmic granule. Component of the mechanistic target of rapamycin complex 1 (mTORC1), an evolutionarily conserved central nutrient sensor that stimulates anabolic reactions and macromolecule biosynthesis to promote cellular biomass generation and growth. In response to nutrients, growth factors or amino acids, mTORC1 is recruited to the lysosome membrane and promotes protein, lipid and nucleotide synthesis by phosphorylating several substrates, such as ribosomal protein S6 kinase (RPS6KB1 and RPS6KB2) and EIF4EBP1 (4E-BP1). In the same time, it inhibits catabolic pathways by phosphorylating the autophagy initiation components ULK1 and ATG13, as well as transcription factor TFEB, a master regulators of lysosomal biogenesis and autophagy. The mTORC1 complex is inhibited in response to starvation and amino acid depletion. Within the mTORC1 complex, RPTOR acts both as a molecular adapter, which (1) mediates recruitment of mTORC1 to lysosomal membranes via interaction with small GTPases Rag (RagA/RRAGA, RagB/RRAGB, RagC/RRAGC and/or RagD/RRAGD), and a (2) substrate-specific adapter, which promotes substrate specificity by binding to TOS motif-containing proteins and direct them towards the active site of the MTOR kinase domain for phosphorylation. mTORC1 complex regulates many cellular processes, such as odontoblast and osteoclast differentiation or neuronal transmission. mTORC1 complex in excitatory neuronal transmission is required for the prosocial behavior induced by the psychoactive substance lysergic acid diethylamide (LSD). This Homo sapiens (Human) protein is Regulatory-associated protein of mTOR.